The primary structure comprises 447 residues: MSLWLGAPVPDIPPDSAVELWKPGAQDASSQAQGGSSCILREEARMPHSAGGTAGVGLEAAEPTALLTRAEPPSEPTEIRPQKRKKGPAPKMLGNELCSVCGDKASGFHYNVLSCEGCKGFFRRSVIKGAHYICHSGGHCPMDTYMRRKCQECRLRKCRQAGMREECVLSEEQIRLKKLKRQEEEQAHATSLPPRASSPPQILPQLSPEQLGMIEKLVAAQQQCNRRSFSDRLRVTPWPMAPDPHSREARQQRFAHFTELAIVSVQEIVDFAKQLPGFLQLSREDQIALLKTSAIEVMLLETSRRYNPGSESITFLKDFSYNREDFAKAGLQVEFINPIFEFSRAMNELQLNDAEFALLIAISIFSADRPNVQDQLQVERLQHTYVEALHAYVSIHHPHDRLMFPRMLMKLVSLRTLSSVHSEQVFALRLQDKKLPPLLSEIWDVHE.

2 disordered regions span residues 1–37 (MSLWLGAPVPDIPPDSAVELWKPGAQDASSQAQGGSS) and 65–88 (ALLTRAEPPSEPTEIRPQKRKKGP). The tract at residues 1 to 96 (MSLWLGAPVP…GPAPKMLGNE (96 aa)) is transactivation AF-1; required for ligand-independent transactivation function. Residues 24–37 (GAQDASSQAQGGSS) show a composition bias toward low complexity. The nuclear receptor DNA-binding region spans 95 to 170 (NELCSVCGDK…AGMREECVLS (76 aa)). 2 NR C4-type zinc fingers span residues 98 to 118 (CSVCGDKASGFHYNVLSCEGC) and 134 to 158 (CHSGGHCPMDTYMRRKCQECRLRKC). A disordered region spans residues 180–202 (KRQEEEQAHATSLPPRASSPPQI). Residues 205–447 (QLSPEQLGMI…LLSEIWDVHE (243 aa)) are transactivation AF-2; required for ligand-dependent transactivation function; mediates interaction with CCAR2. In terms of domain architecture, NR LBD spans 209–447 (EQLGMIEKLV…LLSEIWDVHE (239 aa)).

This sequence belongs to the nuclear hormone receptor family. NR1 subfamily. Heterodimer of NR1H3 and RXR (retinoic acid receptor). Interacts with CCAR2 (via N-terminus) in a ligand-independent manner. Interacts with SIRT1 and this interaction is inhibited by CCAR2. Interacts with GPS2. Ubiquitinated by UBR5, leading to its degradation: UBR5 specifically recognizes and binds ligand-bound NR1H3 when it is not associated with coactivators (NCOAs). In presence of NCOAs, the UBR5-degron is not accessible, preventing its ubiquitination and degradation. Visceral organs specific expression. Strong expression was found in liver, kidney and intestine followed by spleen and to a lesser extent the adrenals.

It is found in the nucleus. Its subcellular location is the cytoplasm. Functionally, nuclear receptor that exhibits a ligand-dependent transcriptional activation activity. Interaction with retinoic acid receptor (RXR) shifts RXR from its role as a silent DNA-binding partner to an active ligand-binding subunit in mediating retinoid responses through target genes defined by LXRES. LXRES are DR4-type response elements characterized by direct repeats of two similar hexanuclotide half-sites spaced by four nucleotides. Plays an important role in the regulation of cholesterol homeostasis, regulating cholesterol uptake through MYLIP-dependent ubiquitination of LDLR, VLDLR and LRP8. Interplays functionally with RORA for the regulation of genes involved in liver metabolism. Induces LPCAT3-dependent phospholipid remodeling in endoplasmic reticulum (ER) membranes of hepatocytes, driving SREBF1 processing and lipogenesis. Via LPCAT3, triggers the incorporation of arachidonate into phosphatidylcholines of ER membranes, increasing membrane dynamics and enabling triacylglycerols transfer to nascent very low-density lipoprotein (VLDL) particles. Via LPCAT3 also counteracts lipid-induced ER stress response and inflammation, likely by modulating SRC kinase membrane compartmentalization and limiting the synthesis of lipid inflammatory mediators. In Homo sapiens (Human), this protein is Oxysterols receptor LXR-alpha (NR1H3).